The primary structure comprises 490 residues: Cytochrome P450 2C55 (490 aa).

Cys-435 is a heme binding site.

It belongs to the cytochrome P450 family. The cofactor is heme. In terms of tissue distribution, highest level in colon. Low levels in liver and small intestine.

It localises to the endoplasmic reticulum membrane. The protein localises to the microsome membrane. It carries out the reaction an organic molecule + reduced [NADPH--hemoprotein reductase] + O2 = an alcohol + oxidized [NADPH--hemoprotein reductase] + H2O + H(+). In terms of biological role, metabolizes arachidonic acid mainly to 19-hydroxyeicosatetraenoic acid (HETE). The protein is Cytochrome P450 2C55 of Mus musculus (Mouse).